Reading from the N-terminus, the 345-residue chain is Holliday junction branch migration complex subunit RuvB (345 aa).

The large ATPase domain (RuvB-L) stretch occupies residues 1-186 (MSTDPDEREV…FGFTAHMDFY (186 aa)). ATP contacts are provided by residues Leu-25, Arg-26, Gly-67, Lys-70, Thr-71, Ser-72, 133–135 (EDF), Arg-176, Tyr-186, and Arg-223. Thr-71 is a binding site for Mg(2+). A small ATPAse domain (RuvB-S) region spans residues 187-257 (EPAELERVLV…VAKAALAVYD (71 aa)). The segment at 260–345 (ELGLDRLDRA…AGANQPGLFE (86 aa)) is head domain (RuvB-H). Arg-315 and Arg-320 together coordinate DNA.

This sequence belongs to the RuvB family. Homohexamer. Forms an RuvA(8)-RuvB(12)-Holliday junction (HJ) complex. HJ DNA is sandwiched between 2 RuvA tetramers; dsDNA enters through RuvA and exits via RuvB. An RuvB hexamer assembles on each DNA strand where it exits the tetramer. Each RuvB hexamer is contacted by two RuvA subunits (via domain III) on 2 adjacent RuvB subunits; this complex drives branch migration. In the full resolvosome a probable DNA-RuvA(4)-RuvB(12)-RuvC(2) complex forms which resolves the HJ.

Its subcellular location is the cytoplasm. It carries out the reaction ATP + H2O = ADP + phosphate + H(+). In terms of biological role, the RuvA-RuvB-RuvC complex processes Holliday junction (HJ) DNA during genetic recombination and DNA repair, while the RuvA-RuvB complex plays an important role in the rescue of blocked DNA replication forks via replication fork reversal (RFR). RuvA specifically binds to HJ cruciform DNA, conferring on it an open structure. The RuvB hexamer acts as an ATP-dependent pump, pulling dsDNA into and through the RuvAB complex. RuvB forms 2 homohexamers on either side of HJ DNA bound by 1 or 2 RuvA tetramers; 4 subunits per hexamer contact DNA at a time. Coordinated motions by a converter formed by DNA-disengaged RuvB subunits stimulates ATP hydrolysis and nucleotide exchange. Immobilization of the converter enables RuvB to convert the ATP-contained energy into a lever motion, pulling 2 nucleotides of DNA out of the RuvA tetramer per ATP hydrolyzed, thus driving DNA branch migration. The RuvB motors rotate together with the DNA substrate, which together with the progressing nucleotide cycle form the mechanistic basis for DNA recombination by continuous HJ branch migration. Branch migration allows RuvC to scan DNA until it finds its consensus sequence, where it cleaves and resolves cruciform DNA. This is Holliday junction branch migration complex subunit RuvB from Mycobacterium ulcerans (strain Agy99).